The following is a 417-amino-acid chain: Vacuolar cation/proton exchanger 3 (417 aa).

Over 1–45 (MENPQIEMGAFKANGPQLQNGGLRSSMVQSWNLQRFVESALRSIR) the chain is Cytoplasmic. A helical transmembrane segment spans residues 46–66 (IVIFTSKLNLLLPFGPASIIL). Residues 67-73 (HYTTSRH) are Extracellular-facing. The chain crosses the membrane as a helical span at residues 74–94 (GLVFLFSMLGITPLAERLGYA). Residues 95–105 (TEQLAIYTGPT) lie on the Cytoplasmic side of the membrane. A helical transmembrane segment spans residues 106–126 (VGGLLNATFGNATEMIIAIYA). A cation selection region spans residues 115–150 (GNATEMIIAIYALKNGMIRVVQQSLLGSILSNMLLV). Over 127–140 (LKNGMIRVVQQSLL) the chain is Extracellular. Residues 141–161 (GSILSNMLLVMGCAFFAGGIV) form a helical membrane-spanning segment. The Cytoplasmic segment spans residues 162–173 (HRNKDQVFSKAT). The chain crosses the membrane as a helical span at residues 174–194 (AVVNSGLLLMAVMGLMFPAVL). Topologically, residues 195 to 207 (HFTHSEVRQGASE) are extracellular. Residues 208–230 (VSLSRFSSCIMLVAYASYLYFQL) form a helical membrane-spanning segment. Over 231–258 (SGRNNAYSPIGSEEMPNEDAAEEDEESE) the chain is Cytoplasmic. Residues 259–279 (IGMWESIAWLAMLTLWVSILS) traverse the membrane as a helical segment. Residues 280–291 (EYLVNAIEGASD) lie on the Extracellular side of the membrane. Residues 292–312 (SLNLPVAFISVILLPIVGNAA) traverse the membrane as a helical segment. The tract at residues 309–344 (GNAAEHASAIMFAMKDKLDITLGVAIGSSTQISMFV) is cation selection. The Cytoplasmic segment spans residues 313–330 (EHASAIMFAMKDKLDITL). Residues 331-351 (GVAIGSSTQISMFVIPFCVVI) traverse the membrane as a helical segment. At 352–360 (GWMMGQKMD) the chain is on the extracellular side. A helical transmembrane segment spans residues 361–381 (LNFQLFETATLFITVLVVAFM). The Cytoplasmic segment spans residues 382–389 (LQDGVANY). Residues 390–410 (LKGLMLILCYLIVAASFFVHV) form a helical membrane-spanning segment. The Extracellular segment spans residues 411–417 (DPQSSDD).

It belongs to the Ca(2+):cation antiporter (CaCA) (TC 2.A.19) family. Cation/proton exchanger (CAX) subfamily. In terms of tissue distribution, ubiquitous.

It localises to the vacuole membrane. In terms of biological role, vacuolar cation/proton exchanger (CAX). Translocates Ca(2+) and other metal ions into vacuoles using the proton gradient formed by H(+)-ATPase and H(+)-pyrophosphatase. This is Vacuolar cation/proton exchanger 3 (CAX3) from Oryza sativa subsp. japonica (Rice).